The chain runs to 141 residues: Hemoglobin subunit alpha (141 aa).

One can recognise a Globin domain in the interval valine 1–arginine 141. Residue serine 3 is modified to Phosphoserine. An N6-succinyllysine mark is found at lysine 7 and lysine 11. Lysine 16 carries the N6-acetyllysine; alternate modification. At lysine 16 the chain carries N6-succinyllysine; alternate. Tyrosine 24 is modified (phosphotyrosine). Residue serine 35 is modified to Phosphoserine. Residue lysine 40 is modified to N6-succinyllysine. Serine 49 is modified (phosphoserine). Position 58 (histidine 58) interacts with O2. Residue histidine 87 participates in heme b binding. Serine 102 carries the post-translational modification Phosphoserine. Threonine 108 carries the post-translational modification Phosphothreonine. At serine 124 the chain carries Phosphoserine. Position 134 is a phosphothreonine (threonine 134). Serine 138 is modified (phosphoserine).

It belongs to the globin family. In terms of assembly, heterotetramer of two alpha chains and two beta chains. In terms of tissue distribution, red blood cells.

Involved in oxygen transport from the lung to the various peripheral tissues. In terms of biological role, hemopressin acts as an antagonist peptide of the cannabinoid receptor CNR1. Hemopressin-binding efficiently blocks cannabinoid receptor CNR1 and subsequent signaling. This is Hemoglobin subunit alpha (HBA) from Chalinolobus morio (Chocolate-wattled bat).